An 865-amino-acid chain; its full sequence is DNA topoisomerase 1 (865 aa).

The region spanning 3–142 (KALVIVESPA…RYSRVVFNEI (140 aa)) is the Toprim domain. Glu9 contacts Mg(2+). The interval 37–65 (LPTSGSAAKKSADSTSTKTAKKPKKDERG) is disordered. The span at 39 to 54 (TSGSAAKKSADSTSTK) shows a compositional bias: low complexity. Asp111 contributes to the Mg(2+) binding site. One can recognise a Topo IA-type catalytic domain in the interval 158–575 (NIDRVNAQQA…HFFSDFTQQL (418 aa)). Residues 192-197 (SAGRVQ) form an interaction with DNA region. The O-(5'-phospho-DNA)-tyrosine intermediate role is filled by Tyr319. 3 C4-type zinc fingers span residues 599–630 (CPTC…KERC), 662–689 (CPKC…NPTC), and 711–736 (CEKC…NEEC).

Belongs to the type IA topoisomerase family. As to quaternary structure, monomer. Mn(2+) serves as cofactor. It depends on Ca(2+) as a cofactor.

It catalyses the reaction ATP-independent breakage of single-stranded DNA, followed by passage and rejoining.. In terms of biological role, releases the supercoiling and torsional tension of DNA, which is introduced during the DNA replication and transcription, by transiently cleaving and rejoining one strand of the DNA duplex. Introduces a single-strand break via transesterification at a target site in duplex DNA. The scissile phosphodiester is attacked by the catalytic tyrosine of the enzyme, resulting in the formation of a DNA-(5'-phosphotyrosyl)-enzyme intermediate and the expulsion of a 3'-OH DNA strand. The free DNA strand then undergoes passage around the unbroken strand, thus removing DNA supercoils. Finally, in the religation step, the DNA 3'-OH attacks the covalent intermediate to expel the active-site tyrosine and restore the DNA phosphodiester backbone. This Escherichia coli (strain K12) protein is DNA topoisomerase 1.